A 60-amino-acid polypeptide reads, in one-letter code: Metallothionein A (60 aa).

Residues 1-28 (MDPCECSKSGNCNCGGSCTCTNCSCKSC) are beta. A divalent metal cation-binding residues include Cys4, Cys6, Cys12, Cys14, Cys18, Cys20, Cys23, Cys25, Cys28, Cys32, Cys33, Cys35, Cys36, Cys40, Cys43, Cys47, Cys49, Cys54, Cys58, and Cys59. The tract at residues 29-60 (KKSCCPCCPSGCTKCASGCVCKGKTCDTSCCQ) is alpha.

Belongs to the metallothionein superfamily. Type 1 family.

Metallothioneins have a high content of cysteine residues that bind various heavy metals. The chain is Metallothionein A (mta) from Parachaenichthys charcoti (Charcot's dragonfish).